Consider the following 238-residue polypeptide: Glutamine amidotransferase-like protein chyE (238 aa).

One can recognise a Glutamine amidotransferase type-1 domain in the interval 8 to 238 (KIAVLINTPP…LERVLQWLSE (231 aa)). Cysteine 102 acts as the Nucleophile in catalysis. Catalysis depends on residues histidine 189 and glutamate 191.

This sequence belongs to the peptidase C26 family.

Its pathway is pigment biosynthesis. In terms of biological role, glutamine amidotransferase-like protein; part of the gene cluster that mediates the biosynthesis of the yellow pigment chrysogine. the NRPS chyA mediates the condensation of anthranilic acid and alanine into the intermediate 2-(2-aminopropanamido)benzoic acid. The remainder of the pathway is highly branched yielding at least 13 chrysogine-related compounds. The malonyl transferase chyE converts 2-(2-aminopropanamido)benzoic acid and 2-(2-aminopropanamido)benzamidine into 2-(2-(2-carboxyacetamido)propanamido)benzoic acid and 3-((1-((2-carbamoylphenyl)amino)-1-oxopropan-2-yl)amino)-3-oxopropanoic acid, respectively. ChyD is an amidase, being responsible for the amidation of the carboxylic acid moiety of 2-(2-aminopropanamido)benzoic acid, 2-(2-(2-carboxyacetamido)propanamido)benzoic acid and 2-(2-((4-amino-1-carboxy-4-oxobutyl)amino)propanamido)benzoic acid. ChyC is involved in the same reactions as ChyD, but plays a more minor role in the amidation reactions compared to chyD. The oxidoreductases chyH and chyM are involved in oxidation reactions that form N-pyruvoylanthranilamide from 2-(2-aminopropanamido)benzamidine and (1-((2-carbamoylphenyl)amino)-1-oxopropan-2-yl)glutamine, respectively. N-pyruvoylanthranilamide is further converted via two further branches in the pathway, yielding chrysogine and additional chrysogine-related coumpounds. Chrysogine is likely formed by a spontaneous ring closure from N-pyruvoylanthranilamide. The protein is Glutamine amidotransferase-like protein chyE of Penicillium rubens (strain ATCC 28089 / DSM 1075 / NRRL 1951 / Wisconsin 54-1255) (Penicillium chrysogenum).